Consider the following 412-residue polypeptide: Putative odorant receptor 85d (412 aa).

The Cytoplasmic portion of the chain corresponds to 1-56 (MLTKKDTQSAKEQEKLKAIPLHSFLKYANVFYLSIGMMAYDHKYSQKWKEVLLHWT). Residues 57-77 (FIAQMVNLNTVLISELIYVFL) form a helical membrane-spanning segment. Over 78-84 (AIGKGSN) the chain is Extracellular. Residues 85 to 105 (FLEATMNLSFIGFVIVGDFKI) form a helical membrane-spanning segment. Residues 106–152 (WNISRQRKRLTQVVSRLEELHPQGLAQQEPYNIGHHLSGYSRYSKFY) are Cytoplasmic-facing. A helical membrane pass occupies residues 153–173 (FGMHMVLIWTYNLYWAVYYLV). The Extracellular segment spans residues 174-219 (CDFWLGMRQFERMLPYYCWVPWDWSTGYSYYFMYISQNIGGQACLS). The chain crosses the membrane as a helical span at residues 220–240 (GQLAADMLMCALVTLVVMHFI). Over 241-282 (RLSAHIESHVAGIGSFQHDLEFLQATVAYHQSLIHLCQDINE) the chain is Cytoplasmic. The chain crosses the membrane as a helical span at residues 283–303 (IFGVSLLSNFVSSSFIICFVG). The Extracellular segment spans residues 304–314 (FQMTIGSKIDN). A helical membrane pass occupies residues 315–335 (LVMLVLFLFCAMVQVFMIATH). At 336-382 (AQRLVDASEQIGQAVYNHDWFRADLRYRKMLILIIKRAQQPSRLKAT) the chain is on the cytoplasmic side. Residues 383–403 (MFLNISLVTVSDLLQLSYKFF) form a helical membrane-spanning segment. The Extracellular portion of the chain corresponds to 404–412 (ALLRTMYVN).

This sequence belongs to the insect chemoreceptor superfamily. Heteromeric odorant receptor channel (TC 1.A.69) family. Or49a subfamily. In terms of assembly, interacts with Orco. Complexes exist early in the endomembrane system in olfactory sensory neurons (OSNs), coupling these complexes to the conserved ciliary trafficking pathway. As to expression, expressed in olfactory sensory neurons in the maxillary palp.

Its subcellular location is the cell membrane. Its function is as follows. Odorant receptor which mediates acceptance or avoidance behavior, depending on its substrates. The odorant receptor repertoire encodes a large collection of odor stimuli that vary widely in identity, intensity, and duration. May form a complex with Orco to form odorant-sensing units, providing sensitive and prolonged odorant signaling and calcium permeability. The polypeptide is Putative odorant receptor 85d (Or85d) (Drosophila melanogaster (Fruit fly)).